An 87-amino-acid chain; its full sequence is Large ribosomal subunit protein bL31B (87 aa).

Belongs to the bacterial ribosomal protein bL31 family. Type B subfamily. In terms of assembly, part of the 50S ribosomal subunit.

This chain is Large ribosomal subunit protein bL31B, found in Escherichia coli O8 (strain IAI1).